The primary structure comprises 834 residues: MVMAVEDSVVRVVVRVRPPTPKELESQRRPVIQVVDERMLVFDPEECDGGFPGLKWSGSHNGPKKKGKDLTFVFDRVFGEMATQEDVFQHTTHNILDSFLQGYNCSVFAYGATGAGKTHTMLGREGEPGIMYLTTMELYRRLEARQEEKQFEVLISYLEVYNEQIHDLLEPKGPLTIREDPDKGVVVPGLSFHQPASAEQLLEMLTRGNCSRTQHPTDANATSSRSHAIFQIFVKQQDRVPGLTQALRVAKMSLIDLAGSERASSTHAKGERLREGANINRSLLALINVLNALADAKGRKSHVPYRDSKLTRLLKDSIGGNCRTVMIAAISPSSLTYEDTYNTLKYADRAKEIRLTLKSNVISVDHHISQYATICQQLQAEVAFLREKLQMYEAGAQALQQQCSPQPPTLSIPQSLSSSSLQPGPSSQSSTLECHAKNETLQEESLGSDAQGQEIVEESASEQEQCPQDKQCPTQKPEPNLPGSPSPSVQAKPGTGQHSPQKQDADHSKQLALQVLRLAQRQYSLLQAANLLTPDMISEFETLQQLVLEESVDHRAESPRSPALARGDPLAQALCSESKSSGYCGPVTRTMAKQLNGLTHTLGAPLAPDCTSDKTFQKPTKEKKRKLTPEEPGSLPAPNLEMKRQRQSFLPCLRRGSLPKAQPCSEPRTPKRERASSPSPSSRVCPATVIKSRVPLGPSALQNCSTPLALPTRDLNTTFNVSEESPSKPSFQEFVDWEKVSPELNSTDQPFLPSAPVFIFTKGRKPSLPAVTASKKRRTMRPSVSRGRSCIARLHSSTLKKPNRPFTVPEPPLSPHCLDDQRTPKGLTGVTESY.

Residues 9-353 (VVRVVVRVRP…LKYADRAKEI (345 aa)) enclose the Kinesin motor domain. 111–118 (GATGAGKT) lines the ATP pocket. The stretch at 368-404 (ISQYATICQQLQAEVAFLREKLQMYEAGAQALQQQCS) forms a coiled coil. Disordered stretches follow at residues 400–508 (QQQC…ADHS), 602–642 (LGAP…NLEM), 655–686 (RGSL…RVCP), and 800–834 (KKPN…TESY). The segment covering 411–432 (SIPQSLSSSSLQPGPSSQSSTL) has biased composition (low complexity). Phosphothreonine is present on T431. Over residues 462-474 (EQEQCPQDKQCPT) the composition is skewed to polar residues. At S484 the chain carries Phosphoserine. Basic and acidic residues predominate over residues 611-620 (TSDKTFQKPT). A Nuclear localization signal motif is present at residues 619–627 (PTKEKKRKL). S634 and S657 each carry phosphoserine. T669 bears the Phosphothreonine mark. S814 is subject to Phosphoserine.

The protein belongs to the TRAFAC class myosin-kinesin ATPase superfamily. Kinesin family. Interacts with MAPRE1; this interaction is required for efficient accumulation at microtubule plus ends. Interacts with KIF2C at microtubule tips; this interaction increases the affinity of both partners for microtubule plus ends and is required for robust microtubule depolymerization. KIF2C phosphorylation by AURKA or AURKB strongly reduces KIF18B-binding.

The protein localises to the nucleus. The protein resides in the cytoplasm. It localises to the cytoskeleton. Functionally, in complex with KIF2C, constitutes the major microtubule plus-end depolymerizing activity in mitotic cells. Its major role may be to transport KIF2C and/or MAPRE1 along microtubules. The polypeptide is Kinesin-like protein KIF18B (Kif18b) (Mus musculus (Mouse)).